Consider the following 562-residue polypeptide: Potassium-transporting ATPase potassium-binding subunit (562 aa).

A run of 12 helical transmembrane segments spans residues 6 to 26, 62 to 82, 132 to 152, 175 to 195, 253 to 273, 283 to 303, 327 to 347, 356 to 376, 379 to 399, 416 to 436, 483 to 503, and 524 to 544; these read FLLI…LGGF, YALA…VLLM, GLTV…FALI, LYVL…QGVL, FVQM…FGQV, LIWA…YAEL, FGIL…CGAV, ALGG…FGGV, GLYG…LMIG, MTAL…ALAL, LLLA…VLAI, and GLLF…LTFI.

The protein belongs to the KdpA family. The system is composed of three essential subunits: KdpA, KdpB and KdpC.

The protein localises to the cell inner membrane. In terms of biological role, part of the high-affinity ATP-driven potassium transport (or Kdp) system, which catalyzes the hydrolysis of ATP coupled with the electrogenic transport of potassium into the cytoplasm. This subunit binds the periplasmic potassium ions and delivers the ions to the membrane domain of KdpB through an intramembrane tunnel. The polypeptide is Potassium-transporting ATPase potassium-binding subunit (Yersinia pestis bv. Antiqua (strain Antiqua)).